The sequence spans 317 residues: Transaldolase 1 (317 aa).

The active-site Schiff-base intermediate with substrate is the lysine 132.

It belongs to the transaldolase family. Type 1 subfamily. Homodimer.

It is found in the cytoplasm. The enzyme catalyses D-sedoheptulose 7-phosphate + D-glyceraldehyde 3-phosphate = D-erythrose 4-phosphate + beta-D-fructose 6-phosphate. Its pathway is carbohydrate degradation; pentose phosphate pathway; D-glyceraldehyde 3-phosphate and beta-D-fructose 6-phosphate from D-ribose 5-phosphate and D-xylulose 5-phosphate (non-oxidative stage): step 2/3. Functionally, transaldolase is important for the balance of metabolites in the pentose-phosphate pathway. This chain is Transaldolase 1, found in Salmonella paratyphi A (strain ATCC 9150 / SARB42).